The primary structure comprises 492 residues: DEAD-box ATP-dependent RNA helicase RhpA (492 aa).

The Q motif signature appears at Pro-20 to Glu-48. One can recognise a Helicase ATP-binding domain in the interval Ile-51–Ile-220. Ala-64 to Thr-71 serves as a coordination point for ATP. The short motif at Asp-168 to Asp-171 is the DEAD box element. Positions Asp-231–Ile-393 constitute a Helicase C-terminal domain. The tract at residues Ala-445–Arg-492 is disordered. Residues Ser-469–Arg-492 are compositionally biased toward basic residues.

It belongs to the DEAD box helicase family. Homodimer. Interacts with RNase J (rnj), might be a member of a minimal RNA degradosome complex.

Its subcellular location is the cytoplasm. It carries out the reaction ATP + H2O = ADP + phosphate + H(+). DEAD-box RNA helicase probably involved in RNA degradation. Unwinds dsRNA in both 5'- and 3'-directions. Background RNA-dependent ATPase activity is stimulated about 5-fold by RNaseJ (rnj). Stimulates the dsRNase activity of RNase J. In Helicobacter pylori (strain B128), this protein is DEAD-box ATP-dependent RNA helicase RhpA (rhpA).